The following is a 382-amino-acid chain: Lipid-A-disaccharide synthase (382 aa).

The protein belongs to the LpxB family.

It catalyses the reaction a lipid X + a UDP-2-N,3-O-bis[(3R)-3-hydroxyacyl]-alpha-D-glucosamine = a lipid A disaccharide + UDP + H(+). It participates in bacterial outer membrane biogenesis; LPS lipid A biosynthesis. Its function is as follows. Condensation of UDP-2,3-diacylglucosamine and 2,3-diacylglucosamine-1-phosphate to form lipid A disaccharide, a precursor of lipid A, a phosphorylated glycolipid that anchors the lipopolysaccharide to the outer membrane of the cell. This is Lipid-A-disaccharide synthase from Dechloromonas aromatica (strain RCB).